A 385-amino-acid chain; its full sequence is DNA replication and repair protein RecF (385 aa).

30–37 is a binding site for ATP; that stretch reads GSNGFGKT.

It belongs to the RecF family.

It is found in the cytoplasm. The RecF protein is involved in DNA metabolism; it is required for DNA replication and normal SOS inducibility. RecF binds preferentially to single-stranded, linear DNA. It also seems to bind ATP. The polypeptide is DNA replication and repair protein RecF (Mycobacterium avium (strain 104)).